Consider the following 299-residue polypeptide: Oxygen-dependent coproporphyrinogen-III oxidase (299 aa).

Ser92 provides a ligand contact to substrate. A divalent metal cation is bound by residues His96 and His106. His106 acts as the Proton donor in catalysis. 108 to 110 (NVR) provides a ligand contact to substrate. A divalent metal cation contacts are provided by His145 and His175. An important for dimerization region spans residues 240 to 275 (YVEFNLVWDRGTLFGLQTGGRTESILMSMPPLVRWE). 258 to 260 (GGR) is a binding site for substrate.

The protein belongs to the aerobic coproporphyrinogen-III oxidase family. In terms of assembly, homodimer. A divalent metal cation is required as a cofactor.

The protein localises to the cytoplasm. It catalyses the reaction coproporphyrinogen III + O2 + 2 H(+) = protoporphyrinogen IX + 2 CO2 + 2 H2O. It participates in porphyrin-containing compound metabolism; protoporphyrin-IX biosynthesis; protoporphyrinogen-IX from coproporphyrinogen-III (O2 route): step 1/1. Functionally, involved in the heme biosynthesis. Catalyzes the aerobic oxidative decarboxylation of propionate groups of rings A and B of coproporphyrinogen-III to yield the vinyl groups in protoporphyrinogen-IX. The chain is Oxygen-dependent coproporphyrinogen-III oxidase from Salmonella heidelberg (strain SL476).